Reading from the N-terminus, the 581-residue chain is Arginine--tRNA ligase (581 aa).

The 'HIGH' region motif lies at 126–136 (PNLAKEMHVGH).

Belongs to the class-I aminoacyl-tRNA synthetase family. In terms of assembly, monomer.

The protein localises to the cytoplasm. The catalysed reaction is tRNA(Arg) + L-arginine + ATP = L-arginyl-tRNA(Arg) + AMP + diphosphate. This Shewanella sp. (strain ANA-3) protein is Arginine--tRNA ligase.